Consider the following 466-residue polypeptide: Cysteine--tRNA ligase (466 aa).

Zn(2+) is bound at residue Cys28. The short motif at 30–40 is the 'HIGH' region element; that stretch reads PTVYNYIHIGN. 3 residues coordinate Zn(2+): Cys208, His233, and Glu237. Positions 265–269 match the 'KMSKS' region motif; it reads KMSKS. Lys268 contributes to the ATP binding site.

Belongs to the class-I aminoacyl-tRNA synthetase family. In terms of assembly, monomer. The cofactor is Zn(2+).

Its subcellular location is the cytoplasm. The catalysed reaction is tRNA(Cys) + L-cysteine + ATP = L-cysteinyl-tRNA(Cys) + AMP + diphosphate. This is Cysteine--tRNA ligase from Staphylococcus aureus (strain MRSA252).